The following is a 393-amino-acid chain: Nuclear speckle splicing regulatory protein 1 homolog (393 aa).

Residues methionine 1–valine 49 form a disordered region. Low complexity predominate over residues alanine 39 to serine 48. Residues asparagine 76 to alanine 166 adopt a coiled-coil conformation. Residues leucine 187–arginine 350 are disordered. Residues lysine 199–arginine 209 show a composition bias toward basic residues. Composition is skewed to basic and acidic residues over residues glutamate 222–tyrosine 236, aspartate 243–leucine 261, aspartate 317–glutamate 333, and serine 341–arginine 350.

Belongs to the NSRP1 family.

The chain is Nuclear speckle splicing regulatory protein 1 homolog from Caenorhabditis briggsae.